The following is a 54-amino-acid chain: Photosystem II reaction center protein K (54 aa).

Residues 1–17 (MFQISLDMISNKINLLG) constitute a propeptide that is removed on maturation. The helical transmembrane segment at 29 to 49 (IVDVLPIIPILFFLLAFVWQA) threads the bilayer.

The protein belongs to the PsbK family. As to quaternary structure, PSII is composed of 1 copy each of membrane proteins PsbA, PsbB, PsbC, PsbD, PsbE, PsbF, PsbH, PsbI, PsbJ, PsbK, PsbL, PsbM, PsbT, PsbY, PsbZ, Psb30/Ycf12, at least 3 peripheral proteins of the oxygen-evolving complex and a large number of cofactors. It forms dimeric complexes.

Its subcellular location is the plastid. It localises to the chloroplast thylakoid membrane. Its function is as follows. One of the components of the core complex of photosystem II (PSII). PSII is a light-driven water:plastoquinone oxidoreductase that uses light energy to abstract electrons from H(2)O, generating O(2) and a proton gradient subsequently used for ATP formation. It consists of a core antenna complex that captures photons, and an electron transfer chain that converts photonic excitation into a charge separation. The chain is Photosystem II reaction center protein K from Euglena stellata.